Here is a 412-residue protein sequence, read N- to C-terminus: MSIEIKNTGVKKVVLAYSGGLDTSAIIPWLKENYDNCEIIAFCADVGQGEEELVGLTEKALASGASECHIVDLKEEFVKEYIYPTIASGAIYEGTYLLGTSMARPIIAKAQVEVARKVGADALCHGCTGKGNDQVRFEGCFAALAPDLKVIAPWREWTMQSREDLLAYLAERDIKTSASATKIYSRDANAFHISHEGGELEDPWNEPSKGVWTLTADPEDAPNKPEYVSLEVEHGRITKVNGEALTPYAALMTLNAIAAPHGVGRIDITENRLVGMKSRGCYETPGGTVMFAALRAIEELVLDKTSRNWREQVAAQMAHLVYDGRWFTPLCKSLLAASESLAESVNGEVVVKLYKGQATAVKKRSPNSLYSEAFATFGEDQVYDQKHAEGFIRLYSLASRIRALNANDVKSK.

Residues 16–24 (AYSGGLDTS) and Ala-44 contribute to the ATP site. L-citrulline contacts are provided by Tyr-96 and Ser-101. Gly-126 contributes to the ATP binding site. Residues Thr-128, Asn-132, and Asp-133 each contribute to the L-aspartate site. Asn-132 provides a ligand contact to L-citrulline. L-citrulline is bound by residues Arg-136, Ser-185, Ser-194, Glu-270, and Tyr-282.

The protein belongs to the argininosuccinate synthase family. Type 1 subfamily. As to quaternary structure, homotetramer.

The protein resides in the cytoplasm. The enzyme catalyses L-citrulline + L-aspartate + ATP = 2-(N(omega)-L-arginino)succinate + AMP + diphosphate + H(+). Its pathway is amino-acid biosynthesis; L-arginine biosynthesis; L-arginine from L-ornithine and carbamoyl phosphate: step 2/3. This chain is Argininosuccinate synthase, found in Shewanella baltica (strain OS185).